The following is an 87-amino-acid chain: uncharacterized protein (87 aa).

The N-terminal stretch at 1 to 19 (MLVLLVAVLVTAVYAFVHA) is a signal peptide. A helical membrane pass occupies residues 39–59 (LVILGAAVALASILYPVLGVL).

The protein to M.leprae ML2453.

The protein localises to the membrane. This is an uncharacterized protein from Mycobacterium bovis (strain ATCC BAA-935 / AF2122/97).